A 168-amino-acid chain; its full sequence is Plastocyanin, chloroplastic (168 aa).

Residues 1-69 (MATVTSTTVA…SAVLASNALA (69 aa)) constitute a chloroplast transit peptide. One can recognise a Plastocyanin-like domain in the interval 70–168 (VEVLLGASDG…AGMVGQVTVN (99 aa)). Cu cation-binding residues include His-106, Cys-153, His-156, and Met-161.

This sequence belongs to the plastocyanin family. Cu(2+) serves as cofactor.

The protein resides in the plastid. Its subcellular location is the chloroplast thylakoid membrane. Its function is as follows. Participates in electron transfer between P700 and the cytochrome b6-f complex in photosystem I. The protein is Plastocyanin, chloroplastic (PETE) of Pisum sativum (Garden pea).